A 429-amino-acid polypeptide reads, in one-letter code: Melanoma-associated antigen 11 (429 aa).

2 disordered regions span residues 1-30 and 188-215; these read METQFRRGGLGCSPASIKRKKKREDSGDFG and IFGSLSDEGSGSQEKEGPSTSPDLIDPE. Over residues 194–209 the composition is skewed to polar residues; the sequence is DEGSGSQEKEGPSTSP. The 200-residue stretch at 222 to 421 folds into the MAGE domain; sequence LHDKIIDLVH…TSYPSLYEDA (200 aa).

In terms of tissue distribution, expressed in tumors of several types, such as melanoma, head and neck squamous cell carcinoma, lung carcinoma and breast carcinoma. Expressed in testis, ovary, prostate, cancerous prostate, breast and adrenal tissue.

It is found in the nucleus. Its subcellular location is the cytoplasm. Acts as androgen receptor coregulator that increases androgen receptor activity by modulating the receptors interdomain interaction. May play a role in embryonal development and tumor transformation or aspects of tumor progression. This Homo sapiens (Human) protein is Melanoma-associated antigen 11.